The chain runs to 94 residues: Aspartyl/glutamyl-tRNA(Asn/Gln) amidotransferase subunit C (94 aa).

This sequence belongs to the GatC family. Heterotrimer of A, B and C subunits.

The catalysed reaction is L-glutamyl-tRNA(Gln) + L-glutamine + ATP + H2O = L-glutaminyl-tRNA(Gln) + L-glutamate + ADP + phosphate + H(+). It carries out the reaction L-aspartyl-tRNA(Asn) + L-glutamine + ATP + H2O = L-asparaginyl-tRNA(Asn) + L-glutamate + ADP + phosphate + 2 H(+). In terms of biological role, allows the formation of correctly charged Asn-tRNA(Asn) or Gln-tRNA(Gln) through the transamidation of misacylated Asp-tRNA(Asn) or Glu-tRNA(Gln) in organisms which lack either or both of asparaginyl-tRNA or glutaminyl-tRNA synthetases. The reaction takes place in the presence of glutamine and ATP through an activated phospho-Asp-tRNA(Asn) or phospho-Glu-tRNA(Gln). This Campylobacter jejuni subsp. doylei (strain ATCC BAA-1458 / RM4099 / 269.97) protein is Aspartyl/glutamyl-tRNA(Asn/Gln) amidotransferase subunit C.